The chain runs to 262 residues: tRNA pseudouridine synthase A (262 aa).

The active-site Nucleophile is the Asp51. Tyr109 provides a ligand contact to substrate.

Belongs to the tRNA pseudouridine synthase TruA family. In terms of assembly, homodimer.

It catalyses the reaction uridine(38/39/40) in tRNA = pseudouridine(38/39/40) in tRNA. Its function is as follows. Formation of pseudouridine at positions 38, 39 and 40 in the anticodon stem and loop of transfer RNAs. In Aliivibrio salmonicida (strain LFI1238) (Vibrio salmonicida (strain LFI1238)), this protein is tRNA pseudouridine synthase A.